Here is a 316-residue protein sequence, read N- to C-terminus: Ornithine carbamoyltransferase (316 aa).

Carbamoyl phosphate is bound by residues 57–60 (STRT), Q84, R108, and 135–138 (HPCQ). L-ornithine is bound by residues N166, D230, and 234–235 (SM). Carbamoyl phosphate is bound by residues 269-270 (CL) and R297.

It belongs to the aspartate/ornithine carbamoyltransferase superfamily. OTCase family.

The protein localises to the cytoplasm. It carries out the reaction carbamoyl phosphate + L-ornithine = L-citrulline + phosphate + H(+). The protein operates within amino-acid biosynthesis; L-arginine biosynthesis; L-arginine from L-ornithine and carbamoyl phosphate: step 1/3. In terms of biological role, reversibly catalyzes the transfer of the carbamoyl group from carbamoyl phosphate (CP) to the N(epsilon) atom of ornithine (ORN) to produce L-citrulline. The chain is Ornithine carbamoyltransferase from Bacillus cereus (strain ZK / E33L).